The chain runs to 84 residues: MNNNTRTLQCRVISNKMQKSAVVAFERFVKHSIYGKFIRRTTKLHIHDENNECNVGDIVSIRECRPISKTKAWTFVGVIKKALT.

It belongs to the universal ribosomal protein uS17 family. Part of the 30S ribosomal subunit.

One of the primary rRNA binding proteins, it binds specifically to the 5'-end of 16S ribosomal RNA. The protein is Small ribosomal subunit protein uS17 of Hamiltonella defensa subsp. Acyrthosiphon pisum (strain 5AT).